We begin with the raw amino-acid sequence, 62 residues long: Small polypeptide DEVIL 17 (62 aa).

The tract at residues 27–58 is required for DVL/RTFL small polypeptide activity; sequence RRNKGCLAMVKERRSRFYIARRCILMLLCWHK. Residues 39-56 form a helical membrane-spanning segment; it reads RRSRFYIARRCILMLLCW.

It belongs to the DVL/RTFL small polypeptides family.

The protein resides in the cell membrane. Functionally, small polypeptide acting as a regulatory molecule which coordinates cellular responses required for differentiation, growth and development, probably by restricting polar cell proliferation in lateral organs and coordinating socket cell recruitment and differentiation at trichome sites. This Arabidopsis thaliana (Mouse-ear cress) protein is Small polypeptide DEVIL 17.